The primary structure comprises 190 residues: Voltage-dependent calcium channel gamma-like subunit (190 aa).

4 helical membrane-spanning segments follow: residues 25 to 45 (FIRTLIITCVALAVVLSSVSI), 96 to 116 (ALAVVAAIFGLEFLMVSQLCE), 131 to 151 (LLVSFVLSSGGLLGFVILLRN), and 155 to 175 (LIGFTLMFWCEFTASFLLFLN).

It belongs to the PMP-22/EMP/MP20 family. CACNG subfamily. As to quaternary structure, the L-type calcium channel is composed of five subunits: alpha-1, alpha-2/delta, beta and gamma.

Its subcellular location is the membrane. In terms of biological role, thought to stabilize the calcium channel in an inactivated (closed) state. Modulates calcium current when coexpressed with CACNA1G. This is Voltage-dependent calcium channel gamma-like subunit from Homo sapiens (Human).